Reading from the N-terminus, the 39-residue chain is Mu-theraphotoxin-Ae1a (39 aa).

Cystine bridges form between Cys7/Cys21, Cys14/Cys26, and Cys20/Cys33. Residue Phe39 is modified to Phenylalanine amide.

The protein belongs to the neurotoxin 10 (Hwtx-1) family. 47 subfamily. In terms of tissue distribution, expressed by the venom gland.

It is found in the secreted. Functionally, insecticidal toxin that acts, at least partially, by inhibiting insect voltage-gated sodium (NaV) channels of several insect species. The toxin binds to the voltage sensor in NaV channel domain II and inhibits channel opening by shifting the threshold for channel activation to more positive voltages. The toxin binding is sensitive to residues in the S1-S2 loop of the domain II voltage sensor. In vivo, the recombinant toxin causes paralysis and/or death to two dipteran species (Lucilia cuprina and Drosophila melanogaster). In contrast, the toxin does not show paralytic or lethal effect on the cotton bollworm Helicoverpa armigera and the triatomine bug Rhodinius prolixus. The sequence is that of Mu-theraphotoxin-Ae1a from Augacephalus ezendami (Mozambique baboon spider).